The chain runs to 240 residues: tRNA1(Val) (adenine(37)-N6)-methyltransferase (240 aa).

It belongs to the methyltransferase superfamily. tRNA (adenine-N(6)-)-methyltransferase family.

Its subcellular location is the cytoplasm. The enzyme catalyses adenosine(37) in tRNA1(Val) + S-adenosyl-L-methionine = N(6)-methyladenosine(37) in tRNA1(Val) + S-adenosyl-L-homocysteine + H(+). Specifically methylates the adenine in position 37 of tRNA(1)(Val) (anticodon cmo5UAC). This is tRNA1(Val) (adenine(37)-N6)-methyltransferase from Vibrio cholerae serotype O1 (strain ATCC 39315 / El Tor Inaba N16961).